Reading from the N-terminus, the 342-residue chain is Thiosulfate/3-mercaptopyruvate sulfurtransferase 2 (342 aa).

Rhodanese domains follow at residues 56–173 (GDAD…DVES) and 224–338 (EDKT…LPIV). Cys298 serves as the catalytic Cysteine persulfide intermediate.

As to expression, expressed in roots, rosette and cauline leaves, stems, flowers and siliques.

The protein resides in the cytoplasm. The catalysed reaction is thiosulfate + hydrogen cyanide = thiocyanate + sulfite + 2 H(+). The enzyme catalyses 2-oxo-3-sulfanylpropanoate + [thioredoxin]-dithiol = [thioredoxin]-disulfide + hydrogen sulfide + pyruvate + H(+). Catalyzes the transfer of a sulfur ion from a donor to cyanide or to other thiol compounds. Substrate preference is 3-mercaptopyruvate &gt; thiosulfate. Involved in embryo and seed development. The polypeptide is Thiosulfate/3-mercaptopyruvate sulfurtransferase 2 (STR2) (Arabidopsis thaliana (Mouse-ear cress)).